Consider the following 125-residue polypeptide: Ribosome maturation factor RimP (125 aa).

It belongs to the RimP family.

The protein resides in the cytoplasm. In terms of biological role, required for maturation of 30S ribosomal subunits. The protein is Ribosome maturation factor RimP of Rickettsia canadensis (strain McKiel).